A 662-amino-acid polypeptide reads, in one-letter code: Calcium-dependent protease (662 aa).

The 334-residue stretch at 196 to 529 folds into the Peptidase S8 domain; it reads QWHLKQTTIG…YGRINALKAV (334 aa). Catalysis depends on charge relay system residues Asp-233, His-270, and Ser-466. Residues 535–662 enclose the P/Homo B domain; sequence AQPEPVSIFT…IRSLTIELGF (128 aa).

It belongs to the peptidase S8 family.

It is found in the cytoplasm. Its function is as follows. Degrades phycobiliproteins in vitro. Has a substrate specificity similar to that of trypsin. This chain is Calcium-dependent protease (prcA), found in Trichormus variabilis (strain ATCC 29413 / PCC 7937) (Anabaena variabilis).